The sequence spans 296 residues: Phosphoribosylaminoimidazole-succinocarboxamide synthase (296 aa).

This sequence belongs to the SAICAR synthetase family.

It carries out the reaction 5-amino-1-(5-phospho-D-ribosyl)imidazole-4-carboxylate + L-aspartate + ATP = (2S)-2-[5-amino-1-(5-phospho-beta-D-ribosyl)imidazole-4-carboxamido]succinate + ADP + phosphate + 2 H(+). The protein operates within purine metabolism; IMP biosynthesis via de novo pathway; 5-amino-1-(5-phospho-D-ribosyl)imidazole-4-carboxamide from 5-amino-1-(5-phospho-D-ribosyl)imidazole-4-carboxylate: step 1/2. The chain is Phosphoribosylaminoimidazole-succinocarboxamide synthase from Geobacter sulfurreducens (strain ATCC 51573 / DSM 12127 / PCA).